Consider the following 256-residue polypeptide: Deoxyribose-phosphate aldolase (256 aa).

D102 (proton donor/acceptor) is an active-site residue. The active-site Schiff-base intermediate with acetaldehyde is K165. The Proton donor/acceptor role is filled by K197.

It belongs to the DeoC/FbaB aldolase family. DeoC type 2 subfamily.

It localises to the cytoplasm. It catalyses the reaction 2-deoxy-D-ribose 5-phosphate = D-glyceraldehyde 3-phosphate + acetaldehyde. The protein operates within carbohydrate degradation; 2-deoxy-D-ribose 1-phosphate degradation; D-glyceraldehyde 3-phosphate and acetaldehyde from 2-deoxy-alpha-D-ribose 1-phosphate: step 2/2. Functionally, catalyzes a reversible aldol reaction between acetaldehyde and D-glyceraldehyde 3-phosphate to generate 2-deoxy-D-ribose 5-phosphate. This is Deoxyribose-phosphate aldolase from Shewanella sp. (strain W3-18-1).